The primary structure comprises 141 residues: Large ribosomal subunit protein uL11 (141 aa).

Belongs to the universal ribosomal protein uL11 family. As to quaternary structure, part of the ribosomal stalk of the 50S ribosomal subunit. Interacts with L10 and the large rRNA to form the base of the stalk. L10 forms an elongated spine to which L12 dimers bind in a sequential fashion forming a multimeric L10(L12)X complex. One or more lysine residues are methylated.

Forms part of the ribosomal stalk which helps the ribosome interact with GTP-bound translation factors. In Syntrophomonas wolfei subsp. wolfei (strain DSM 2245B / Goettingen), this protein is Large ribosomal subunit protein uL11.